A 292-amino-acid polypeptide reads, in one-letter code: Bifunctional protein FolD 1 (292 aa).

Residue 165–167 (GRS) participates in NADP(+) binding.

It belongs to the tetrahydrofolate dehydrogenase/cyclohydrolase family. Homodimer.

It catalyses the reaction (6R)-5,10-methylene-5,6,7,8-tetrahydrofolate + NADP(+) = (6R)-5,10-methenyltetrahydrofolate + NADPH. The catalysed reaction is (6R)-5,10-methenyltetrahydrofolate + H2O = (6R)-10-formyltetrahydrofolate + H(+). It participates in one-carbon metabolism; tetrahydrofolate interconversion. Catalyzes the oxidation of 5,10-methylenetetrahydrofolate to 5,10-methenyltetrahydrofolate and then the hydrolysis of 5,10-methenyltetrahydrofolate to 10-formyltetrahydrofolate. This Myxococcus xanthus (strain DK1622) protein is Bifunctional protein FolD 1.